The chain runs to 420 residues: Threonine aspartase 1 (420 aa).

The interval 1–25 is disordered; it reads MIMEKGMNSGEGLPSRSSQASAAKV. Thr-234 serves as the catalytic Nucleophile.

This sequence belongs to the Ntn-hydrolase family. In terms of assembly, intramolecular proteolysis generates 2 subunits, alpha and beta, which reassemble through a non-covalent association to form the fully active enzyme.

In terms of biological role, protease responsible for KMT2A/MLL1 and KMT2D/MLL2 processing and activation. Through substrate activation, it controls the expression of HOXA genes, and the expression of key cell cycle regulators including CCNA1, CCNB1, CCNE1 and CDKN2A. The chain is Threonine aspartase 1 (Tasp1) from Mus musculus (Mouse).